Consider the following 227-residue polypeptide: Octanoyltransferase (227 aa).

The BPL/LPL catalytic domain occupies Asp35–Ala210. Residues Arg74 to His81, Ser141 to Gly143, and Gly154 to Ala156 each bind substrate. Residue Cys172 is the Acyl-thioester intermediate of the active site.

Belongs to the LipB family.

It is found in the cytoplasm. The catalysed reaction is octanoyl-[ACP] + L-lysyl-[protein] = N(6)-octanoyl-L-lysyl-[protein] + holo-[ACP] + H(+). It participates in protein modification; protein lipoylation via endogenous pathway; protein N(6)-(lipoyl)lysine from octanoyl-[acyl-carrier-protein]: step 1/2. In terms of biological role, catalyzes the transfer of endogenously produced octanoic acid from octanoyl-acyl-carrier-protein onto the lipoyl domains of lipoate-dependent enzymes. Lipoyl-ACP can also act as a substrate although octanoyl-ACP is likely to be the physiological substrate. The chain is Octanoyltransferase from Pectobacterium atrosepticum (strain SCRI 1043 / ATCC BAA-672) (Erwinia carotovora subsp. atroseptica).